The chain runs to 435 residues: Centrosomal protein of 55 kDa (435 aa).

Disordered stretches follow at residues methionine 1–alanine 63, histidine 213–arginine 239, and glutamate 268–glutamine 287. Coiled coils occupy residues serine 18–tyrosine 140 and glutamate 185–arginine 373. Composition is skewed to basic and acidic residues over residues alanine 26–arginine 49 and histidine 213–serine 222.

The protein resides in the cytoplasm. It is found in the cytoskeleton. It localises to the microtubule organizing center. The protein localises to the centrosome. Its subcellular location is the centriole. The protein resides in the cleavage furrow. It is found in the midbody. It localises to the midbody ring. Its function is as follows. Plays a role in mitotic exit and cytokinesis. Recruits PDCD6IP and TSG101 to midbody during cytokinesis. Required for successful completion of cytokinesis. Not required for microtubule nucleation. Plays a role in the development of the brain and kidney. The protein is Centrosomal protein of 55 kDa of Danio rerio (Zebrafish).